Consider the following 28-residue polypeptide: Cruzioseptin-10 (28 aa).

As to expression, expressed by the skin glands.

The protein localises to the secreted. Functionally, has antimicrobial activity. The polypeptide is Cruzioseptin-10 (Cruziohyla calcarifer (Splendid leaf frog)).